The following is a 419-amino-acid chain: Gamma-glutamyl phosphate reductase (419 aa).

It belongs to the gamma-glutamyl phosphate reductase family.

It localises to the cytoplasm. The catalysed reaction is L-glutamate 5-semialdehyde + phosphate + NADP(+) = L-glutamyl 5-phosphate + NADPH + H(+). It functions in the pathway amino-acid biosynthesis; L-proline biosynthesis; L-glutamate 5-semialdehyde from L-glutamate: step 2/2. In terms of biological role, catalyzes the NADPH-dependent reduction of L-glutamate 5-phosphate into L-glutamate 5-semialdehyde and phosphate. The product spontaneously undergoes cyclization to form 1-pyrroline-5-carboxylate. The sequence is that of Gamma-glutamyl phosphate reductase from Gloeobacter violaceus (strain ATCC 29082 / PCC 7421).